The following is a 742-amino-acid chain: Two pore calcium channel protein 1 (742 aa).

Residues 1-44 (MSEAQAPLITEEAAERGLASSGSRRLSDGGGGQGSRKYRRRSDA) are disordered. Residues 1-82 (MSEAQAPLIT…NDTRFGRAMS (82 aa)) are Cytoplasmic-facing. Residues 83–103 (FYFVYLRLDWLWSLNIFALIL) form a helical membrane-spanning segment. Over 104–140 (LNFLEKPLWCRKDALHACDQRDMYFLGQLPYFSKTES) the chain is Extracellular. The chain crosses the membrane as a helical span at residues 141 to 161 (LIYEGLTLVILVMEILCPLSY). Residues 162-176 (EGLNIFWRSTTNKLK) lie on the Cytoplasmic side of the membrane. The helical transmembrane segment at 177–197 (ILLLFILACDILVFAFSSQPF) threads the bilayer. The Extracellular segment spans residues 198–204 (RLAPYIR). Residues 205-226 (VVFLIMTIRELRMCAITLAGLI) form a helical; Voltage-sensor membrane-spanning segment. The chain crosses the membrane as a helical span at residues 227–247 (GTYLNVLALSLLFLLFASWLA). Topologically, residues 248–258 (YVTFEDTPQGK) are extracellular. An intramembrane region (pore-forming) is located at residues 259 to 273 (TIFSSYGVTLYQMFV). Residues 274 to 296 (LFTTSNNPDVWVPAYKISRWYSL) lie on the Extracellular side of the membrane. A helical membrane pass occupies residues 297–317 (FFIVYVLLGVYFLTNLILAVI). Over 318-446 (YDSFKEQFAK…SFVRSRTFEY (129 aa)) the chain is Cytoplasmic. EF-hand domains are found at residues 335–370 (IRKN…LNKY) and 376–411 (TSRE…IAIK). The helical transmembrane segment at 447–467 (IIVFVLLINLVAVIIETTLDI) threads the bilayer. Residues 468-480 (ENSSSQETWQEVE) are Extracellular-facing. Asn469 carries an N-linked (GlcNAc...) asparagine glycan. The helical transmembrane segment at 481–501 (FFLGWIYVAEMALKIFSLGFG) threads the bilayer. At 502–510 (AYWMEGQNK) the chain is on the cytoplasmic side. A helical transmembrane segment spans residues 511–531 (FDFVLTWTIFIGETLTFAFPS). Over 532-540 (KLPFLSNGE) the chain is Extracellular. Residues 541-558 (WIRYLLLGRVLRLTRILL) form a helical; Voltage-sensor membrane-spanning segment. The Cytoplasmic portion of the chain corresponds to 559 to 582 (QVQRFRVFVATFFTLMSSLMPYLG). A helical transmembrane segment spans residues 583–603 (IVFCILCMYCSLGLQIFGGIV). Topologically, residues 604–627 (YAGNPTLEETDLFSNDYLLFNFND) are extracellular. Positions 628 to 642 (YPSGMVTLFNLLVMG) form an intramembrane region, pore-forming. Over 643–663 (NWQVWMESYWQLTGSSWSLIY) the chain is Extracellular. A helical membrane pass occupies residues 664 to 684 (FVSFYLISILLLLNLIVAFVL). Residues 685–742 (EAFFAEMELEKGEEVDIQSPTSGGIKKRRSMRVRSKGTMVDILLHHMLSNELDGSQNS) lie on the Cytoplasmic side of the membrane.

The protein belongs to the calcium channel alpha-1 subunit (TC 1.A.1.11) family. Two pore calcium channel subfamily. Homodimer.

It is found in the membrane. Inhibited by Al(3+). Functions as a voltage-gated inward-rectifying Ca(2+) channel (VDCC) across the plasma membrane that mediates sucrose-induced Ca(2+) influx in autotrophically grown leaf cells. Acts as the major ROS-responsive Ca(2+) channel and is the possible target of Al-dependent inhibition. Plays a regulatory role in defense responses. The sequence is that of Two pore calcium channel protein 1 (TPC1) from Hordeum vulgare (Barley).